Reading from the N-terminus, the 513-residue chain is Sulfhydryl oxidase 1 (513 aa).

An N-terminal signal peptide occupies residues 1-30; it reads MAAAAVARRVVLVLVLAAASLAAAPRGAAA. A Thioredoxin domain is found at 31-174; the sequence is RSLGGREGPG…LLKWINNQMK (144 aa). The N-linked (GlcNAc...) asparagine glycan is linked to Asn-51. Active-site nucleophile residues include Cys-76 and Cys-79. The cysteines at positions 76 and 79 are disulfide-linked. Asn-193 and Asn-266 each carry an N-linked (GlcNAc...) asparagine glycan. A disulfide bond links Cys-301 and Cys-313. Residues 304 to 406 enclose the ERV/ALR sulfhydryl oxidase domain; the sequence is SKSETRGFSC…GDPLFPKVTW (103 aa). Residues Arg-309, Trp-316, His-320, Glu-350, His-354, 377–384, Lys-403, and Trp-406 contribute to the FAD site; that span reads WSTHNKVN. An intrachain disulfide couples Cys-348 to Cys-351. An intrachain disulfide couples Cys-412 to Cys-415.

FAD is required as a cofactor.

It is found in the secreted. It catalyses the reaction 2 R'C(R)SH + O2 = R'C(R)S-S(R)CR' + H2O2. Functionally, catalyzes the oxidation of sulfhydryl groups in peptide and protein thiols to disulfides with the reduction of oxygen to hydrogen peroxide. May contribute to disulfide bond formation in a variety of secreted proteins. This chain is Sulfhydryl oxidase 1 (QSOX1), found in Oryza sativa subsp. japonica (Rice).